The primary structure comprises 598 residues: Nuclear receptor subfamily 4 group A member 2 (598 aa).

Residues 1-22 form a disordered region; it reads MPCVQAQYGSSPQGASPASQSY. Residues 8–22 are compositionally biased toward low complexity; that stretch reads YGSSPQGASPASQSY. A DNA-binding region (nuclear receptor) is located at residues 260 to 335; sequence EGLCAVCGDN…VGMVKEVVRT (76 aa). 2 consecutive NR C4-type zinc fingers follow at residues 263 to 283 and 299 to 323; these read CAVCGDNAACQHYGVRTCEGC and CLANKNCPVDKRRRNRCQYCRFQKC. Residues 287-314 carry the Bipartite nuclear localization signal (NLS1) motif; that stretch reads FKRTVQKNAKYVCLANKNCPVDKRRRNR. Residues 337–361 are disordered; sequence SLKGRRGRLPSKPKSPQDPSPPSPP. The Nuclear localization signal (NLS1) motif lies at 338–350; the sequence is LKGRRGRLPSKPK. Residues 352 to 361 are compositionally biased toward pro residues; that stretch reads PQDPSPPSPP. One can recognise an NR LBD domain in the interval 360–595; that stretch reads PPVSLISALV…AIIDKLFLDT (236 aa). Residues 443–452 carry the nuclear export sequence (NES1) motif; sequence FLELFVLRLA. The short motif at 568-577 is the nuclear export sequence (NES2) element; it reads QGLQRIFYLK.

This sequence belongs to the nuclear hormone receptor family. NR4 subfamily. As to quaternary structure, interacts with SFPQ, NCOR2, SIN3A and HADC1. The interaction with NCOR2 increases in the absence of PITX3. Interacts with PER2. In terms of tissue distribution, brain.

The protein resides in the cytoplasm. It is found in the nucleus. In terms of biological role, transcriptional regulator which is important for the differentiation and maintenance of meso-diencephalic dopaminergic (mdDA) neurons during development. It is crucial for expression of a set of genes such as SLC6A3, SLC18A2, TH and DRD2 which are essential for development of mdDA neurons. This chain is Nuclear receptor subfamily 4 group A member 2 (Nr4a2), found in Mus musculus (Mouse).